The sequence spans 943 residues: Isoleucine--tRNA ligase (943 aa).

The short motif at 59 to 69 (PYANGQIHLGH) is the 'HIGH' region element. L-isoleucyl-5'-AMP is bound at residue E577. Positions 618–622 (KMSKS) match the 'KMSKS' region motif. ATP is bound at residue K621. Zn(2+) is bound by residues C906, C909, C926, and C929.

It belongs to the class-I aminoacyl-tRNA synthetase family. IleS type 1 subfamily. Monomer. Zn(2+) is required as a cofactor.

It localises to the cytoplasm. The enzyme catalyses tRNA(Ile) + L-isoleucine + ATP = L-isoleucyl-tRNA(Ile) + AMP + diphosphate. Its function is as follows. Catalyzes the attachment of isoleucine to tRNA(Ile). As IleRS can inadvertently accommodate and process structurally similar amino acids such as valine, to avoid such errors it has two additional distinct tRNA(Ile)-dependent editing activities. One activity is designated as 'pretransfer' editing and involves the hydrolysis of activated Val-AMP. The other activity is designated 'posttransfer' editing and involves deacylation of mischarged Val-tRNA(Ile). This is Isoleucine--tRNA ligase from Xanthomonas campestris pv. campestris (strain B100).